The primary structure comprises 212 residues: Ribosomal RNA small subunit methyltransferase G (212 aa).

S-adenosyl-L-methionine contacts are provided by residues G80, L85, 131 to 132 (AE), and R146.

The protein belongs to the methyltransferase superfamily. RNA methyltransferase RsmG family.

The protein localises to the cytoplasm. The enzyme catalyses guanosine(527) in 16S rRNA + S-adenosyl-L-methionine = N(7)-methylguanosine(527) in 16S rRNA + S-adenosyl-L-homocysteine. Its function is as follows. Specifically methylates the N7 position of guanine in position 527 of 16S rRNA. The polypeptide is Ribosomal RNA small subunit methyltransferase G (Xanthomonas euvesicatoria pv. vesicatoria (strain 85-10) (Xanthomonas campestris pv. vesicatoria)).